Consider the following 337-residue polypeptide: Tetraacyldisaccharide 4'-kinase (337 aa).

58-65 (TVGGSGKT) contributes to the ATP binding site.

This sequence belongs to the LpxK family.

The enzyme catalyses a lipid A disaccharide + ATP = a lipid IVA + ADP + H(+). It participates in glycolipid biosynthesis; lipid IV(A) biosynthesis; lipid IV(A) from (3R)-3-hydroxytetradecanoyl-[acyl-carrier-protein] and UDP-N-acetyl-alpha-D-glucosamine: step 6/6. In terms of biological role, transfers the gamma-phosphate of ATP to the 4'-position of a tetraacyldisaccharide 1-phosphate intermediate (termed DS-1-P) to form tetraacyldisaccharide 1,4'-bis-phosphate (lipid IVA). The chain is Tetraacyldisaccharide 4'-kinase from Shewanella putrefaciens (strain CN-32 / ATCC BAA-453).